A 511-amino-acid chain; its full sequence is Maturase K (511 aa).

This sequence belongs to the intron maturase 2 family. MatK subfamily.

It localises to the plastid. Its subcellular location is the chloroplast. Functionally, usually encoded in the trnK tRNA gene intron. Probably assists in splicing its own and other chloroplast group II introns. The protein is Maturase K of Pistia stratiotes (Water lettuce).